Reading from the N-terminus, the 399-residue chain is RNA polymerase sigma factor SigA1 (399 aa).

Residues 1–73 are disordered; sequence MTQLISIDKE…DEDSVGEDED (73 aa). A compositionally biased stretch (acidic residues) spans 60–73; it reads DAIDDEDSVGEDED. The tract at residues 167–237 is sigma-70 factor domain-2; the sequence is MVQSNLRLVV…TRAIADQSRT (71 aa). The Interaction with polymerase core subunit RpoC signature appears at 191-194; that stretch reads DLIQ. A sigma-70 factor domain-3 region spans residues 246-321; sequence ETISRIKKTT…EADGETPEDE (76 aa). Residues 334-387 are sigma-70 factor domain-4; that stretch reads VLSTLSPRERDVLRLRYGLDDGRMKTLEEIGQLFNVTRERIRQIEAKALRKLRH. Positions 360-379 form a DNA-binding region, H-T-H motif; sequence LEEIGQLFNVTRERIRQIEA.

The protein belongs to the sigma-70 factor family. RpoD/SigA subfamily. As to quaternary structure, interacts transiently with the RNA polymerase catalytic core.

It is found in the cytoplasm. In terms of biological role, sigma factors are initiation factors that promote the attachment of RNA polymerase to specific initiation sites and are then released. This sigma factor is the primary sigma factor during exponential growth. The protein is RNA polymerase sigma factor SigA1 of Synechococcus elongatus (strain ATCC 33912 / PCC 7942 / FACHB-805) (Anacystis nidulans R2).